The following is a 54-amino-acid chain: Ovomucoid (54 aa).

Positions 4–54 (VDCSDYPKPVCSLEYMPLCGSDSKTYSNKCDFCNAFVDSNGTLSLSHFGKC) constitute a Kazal-like domain. 3 cysteine pairs are disulfide-bonded: C6-C36, C14-C33, and C22-C54. The N-linked (GlcNAc...) asparagine glycan is linked to N43.

It is found in the secreted. This is Ovomucoid from Circus aeruginosus (Western marsh harrier).